Here is a 234-residue protein sequence, read N- to C-terminus: MSVPTLPTGPTVDLAQAAERLIKGRRAVRAFRPDEVPEETMRAVFELAGHAPSNSNTQPWHVEVVSGAARDRLAEALVTAHAEERVTVDFPYREGLFQGVLQERRADFGSRLYAALGIARDQTDLLQGYNTESLRFYGAPHVAMLFAPNNTEARIAGDMGIYAQTLMLAMTAHGIASCPQALLSFYADTVRAELGVENRKLLMGISFGYADDTAAVNGVRIPRAGLSETTRFSR.

25-29 (RRAVR) serves as a coordination point for FMN. Residues S55, R105, Y113, and I118 each coordinate NADP(+). Residues Y137, 181 to 182 (AL), and R223 each bind FMN.

It belongs to the nitroreductase family. In terms of assembly, homodimer. The cofactor is FMN.

Functionally, confers resistance to antitubercular drugs benzothiazinone (BTZ) and dinitrobenzamide (DNB). Inactivates BTZ and DNB by reducing an essential nitro group of these compounds to amino group or to hydroxyl amine, respectively, using NADH or NADPH as source of reducing equivalents; two electrons are transferred. Able to reduce the nitro group of bicyclic nitroimidazole PA-824, but not of quinone menadione, nitrofurazone, methyl-4-nitrobenzoate, 4-nitrobenzene methyl sulfonate or 4-nitroacetophenone. This is Nitroreductase NfnB from Mycolicibacterium smegmatis (strain ATCC 700084 / mc(2)155) (Mycobacterium smegmatis).